We begin with the raw amino-acid sequence, 580 residues long: Trafficking protein particle complex subunit 14 (580 aa).

2 disordered regions span residues 90–138 (GMPG…ATTL) and 480–533 (VSHP…RSGS). Gly residues predominate over residues 105–116 (PGGGDPGGGGLF). A compositionally biased stretch (low complexity) spans 124-137 (THGPGPATSGGATT). Residue S491 is modified to Phosphoserine. Low complexity predominate over residues 492–502 (RKSSPSSPAVR). Positions 512–525 (LGRSQSFSHQQPSR) are enriched in polar residues. Position 517 is a phosphoserine (S517). Residue T541 is modified to Phosphothreonine. Phosphoserine is present on S546.

In terms of assembly, component of the multisubunit TRAPP II complex, which includes at least TRAPPC1, TRAPPC2, TRAPPC2L, TRAPPC3, TRAPPC4, TRAPPC5, TRAPPC6A/B, TRAPPC9, TRAPPC10 and TRAPPC14. TRAPPC9, TRAPPC10 and TRAPPC14 are specific subunits of the TRAPP II complex. Interacts with alpha-tubulin during mitosis. Interacts with RAB3IP (via the N-terminal region); this interaction mediates RAB3IP association with the TRAPP II complex. Interacts with TRAPPC10. Interacts with FBF1. In terms of tissue distribution, broadly expressed. High levels in brain, cerebellum, testis and whole blood.

It localises to the cytoplasm. It is found in the cytoskeleton. Its subcellular location is the spindle. The protein resides in the vesicle. The protein localises to the midbody. Specific subunit of the TRAPP (transport protein particle) II complex, a highly conserved vesicle tethering complex that functions in late Golgi trafficking as a membrane tether. TRAPP II complex also has GEF activity toward RAB1A. TRAPPC14 is dispensable for TRAPPII complex integrity but mediates RAB3IP preciliary vesicle trafficking to the mother centriole during ciliogenesis. Modulates YAP1 activity as transcriptional regulator. This chain is Trafficking protein particle complex subunit 14, found in Homo sapiens (Human).